The primary structure comprises 369 residues: Quinolinate synthase (369 aa).

2 residues coordinate iminosuccinate: histidine 47 and serine 64. Cysteine 111 is a [4Fe-4S] cluster binding site. Iminosuccinate is bound by residues 142–144 (YVN) and serine 163. Cysteine 231 lines the [4Fe-4S] cluster pocket. Iminosuccinate is bound by residues 257 to 259 (HPE) and threonine 274. Cysteine 321 lines the [4Fe-4S] cluster pocket.

Belongs to the quinolinate synthase family. Type 3 subfamily. [4Fe-4S] cluster is required as a cofactor.

The protein resides in the cytoplasm. It catalyses the reaction iminosuccinate + dihydroxyacetone phosphate = quinolinate + phosphate + 2 H2O + H(+). The protein operates within cofactor biosynthesis; NAD(+) biosynthesis; quinolinate from iminoaspartate: step 1/1. In terms of biological role, catalyzes the condensation of iminoaspartate with dihydroxyacetone phosphate to form quinolinate. The sequence is that of Quinolinate synthase from Bacillus pumilus (strain SAFR-032).